The following is a 435-amino-acid chain: 5-hydroxybenzimidazole synthase (435 aa).

Substrate contacts are provided by residues methionine 95, tyrosine 124, histidine 163, 186-188 (SKG), 227-230 (NGLR), and glutamate 266. Histidine 270 lines the Zn(2+) pocket. Tyrosine 293 provides a ligand contact to substrate. Zn(2+) is bound at residue histidine 334. 3 residues coordinate [4Fe-4S] cluster: cysteine 410, cysteine 413, and cysteine 417.

It belongs to the ThiC family. 5-hydroxybenzimidazole synthase subfamily. In terms of assembly, homodimer. It depends on [4Fe-4S] cluster as a cofactor.

It carries out the reaction 5-amino-1-(5-phospho-beta-D-ribosyl)imidazole + AH2 + S-adenosyl-L-methionine = 5-hydroxybenzimidazole + 5'-deoxyadenosine + formate + L-methionine + A + NH4(+) + phosphate + 2 H(+). It participates in cofactor biosynthesis; adenosylcobalamin biosynthesis. Catalyzes the complex conversion of aminoimidazole ribotide (AIR) to 5-hydroxybenzimidazole (5-HBI) in a radical S-adenosyl-L-methionine (SAM)-dependent reaction. Is thus involved in the anaerobic biosynthesis of dimethylbenzimidazole (DMB), the lower axial ligand of vitamin B12 (cobalamin). The sequence is that of 5-hydroxybenzimidazole synthase from Desulfuromonas acetoxidans (strain DSM 684 / 11070).